The sequence spans 504 residues: Anaerobic nitric oxide reductase transcription regulator NorR (504 aa).

Aspartate 57 is modified (4-aspartylphosphate). The 230-residue stretch at 187 to 416 folds into the Sigma-54 factor interaction domain; it reads MIGLSPGMTQ…LEHAIHRAVV (230 aa). ATP is bound by residues 215–222 and 278–287; these read GETGTGKE and ADNGTLFLDE. The H-T-H motif DNA-binding region spans 479–498; that stretch reads WAACARMLETDVANLHRLAK.

It participates in nitrogen metabolism; nitric oxide reduction. Required for the expression of anaerobic nitric oxide (NO) reductase, acts as a transcriptional activator for at least the norVW operon. Activation also requires sigma-54. The chain is Anaerobic nitric oxide reductase transcription regulator NorR from Shigella sonnei (strain Ss046).